Reading from the N-terminus, the 256-residue chain is MRLDGKTALITGSARGIGRAFAEAYVREGARVAIADINLEAARATAAEIGPAACAIALDVTDQASIDRCVAELLDRWGSIDILVNNAALFDLAPIVEITRESYDRLFAINVSGTLFMMQAVARAMIAGGRGGKIINMASQAGRRGEALVGVYCATKAAVISLTQSAGLNLIRHGINVNAIAPGVVDGEHWDGVDAKFADYENLPRGEKKRQVGAAVPFGRMGRAEDLTGMAIFLATPEADYIVAQTYNVDGGNWMS.

Residues 15–17, D36, 59–60, N86, Y152, K156, and 182–187 contribute to the NAD(+) site; these read RGI, DV, and PGVVDG. Y152 serves as the catalytic Proton acceptor.

The protein belongs to the short-chain dehydrogenases/reductases (SDR) family. Homodimer. May function as a tetramer in vivo.

It carries out the reaction keto-D-fructose + NADH + H(+) = D-sorbitol + NAD(+). It catalyses the reaction galactitol + NAD(+) = keto-D-tagatose + NADH + H(+). The catalysed reaction is L-iditol + NAD(+) = keto-L-sorbose + NADH + H(+). With respect to regulation, inhibited by DTT, N-bromosuccinimide and iodoacetic acid. Catalyzes the oxidation of D-sorbitol (D-glucitol) to D-fructose. Can also catalyze the oxidation of galactitol to D-tagatose and the oxidation of L-iditol, with lower efficiency. This is Sorbitol dehydrogenase (polS) from Cereibacter sphaeroides (Rhodobacter sphaeroides).